The sequence spans 849 residues: Neprilysin-1 (849 aa).

Residues 1 to 113 (MSQQHEATAA…LKESQQRRRL (113 aa)) lie on the Cytoplasmic side of the membrane. Residues 41-61 (QQQVQHQAPHQMQQQQQQQQQ) are compositionally biased toward low complexity. The tract at residues 41–63 (QQQVQHQAPHQMQQQQQQQQQNK) is disordered. The helical; Signal-anchor for type II membrane protein transmembrane segment at 114–134 (LVLAIAFTVLGAAIGALAIYF) threads the bilayer. Residues 135 to 849 (ASVHQRCHLY…MNPAEKCSVW (715 aa)) are Extracellular-facing. Residues 146–155 (LEPDNDDRPN) are compositionally biased toward basic and acidic residues. The interval 146-167 (LEPDNDDRPNGRWNQDSGSAHE) is disordered. The Peptidase M13 domain occupies 172–849 (ICMTQECVRT…MNPAEKCSVW (678 aa)). 5 cysteine pairs are disulfide-bonded: C173–C178, C196–C834, C204–C794, C260–C512, and C721–C846. N-linked (GlcNAc...) asparagine glycans are attached at residues N309, N326, N393, N589, and N599. H684 provides a ligand contact to Zn(2+). E685 is an active-site residue. H688 provides a ligand contact to Zn(2+). An N-linked (GlcNAc...) asparagine glycan is attached at N709. E746 provides a ligand contact to Zn(2+). D750 acts as the Proton donor in catalysis. N778 carries an N-linked (GlcNAc...) asparagine glycan.

Belongs to the peptidase M13 family. Requires Zn(2+) as cofactor. In terms of tissue distribution, expressed in the testicular tube, near and in the seminal vesicles. In adults and third-instar larvae, expressed in the midgut and in the mushroom bodies of the brain and neurons in the pars intercerebralis. Also expressed in neurons of the ventral ganglion and imaginal disks (wing and leg) of third-instar larvae. In stage 17 embryos, expressed in the peripheral nervous system, pharynx and midgut.

The protein resides in the cell membrane. The catalysed reaction is Preferential cleavage of polypeptides between hydrophobic residues, particularly with Phe or Tyr at P1'.. Its function is as follows. Metalloendoprotease which functions in fertility and memory formation. Required in the dorsal paired medial neurons and alpha/beta mushroom body neurons for the proper formation of long-term and middle-term memories. Required in males to maximise egg-laying in female mates and is also required in females for their fertility. In Drosophila melanogaster (Fruit fly), this protein is Neprilysin-1.